The chain runs to 236 residues: Small ribosomal subunit protein uS2c (236 aa).

This sequence belongs to the universal ribosomal protein uS2 family.

The protein resides in the plastid. It is found in the chloroplast. This Saccharum hybrid (Sugarcane) protein is Small ribosomal subunit protein uS2c (rps2).